We begin with the raw amino-acid sequence, 203 residues long: GTP-binding protein ypt1 (203 aa).

GTP contacts are provided by residues 15-23 (GDSGVGKSC), 33-40 (YTESYIST), 63-67 (DTAGQ), 121-124 (NKSD), and 151-153 (SAK). The Effector region motif lies at 37-45 (YISTIGVDF). T164 is subject to Phosphothreonine. S-geranylgeranyl cysteine attachment occurs at residues C202 and C203.

This sequence belongs to the small GTPase superfamily. Rab family.

It localises to the endoplasmic reticulum membrane. It is found in the golgi apparatus membrane. Its subcellular location is the cytoplasm. The protein localises to the preautophagosomal structure membrane. Its activity is regulated as follows. Rab activation is generally mediated by a guanine exchange factor (GEF), while inactivation through hydrolysis of bound GTP is catalyzed by a GTPase activating protein (GAP). Its function is as follows. The small GTPases Rab are key regulators of intracellular membrane trafficking, from the formation of transport vesicles to their fusion with membranes. Rabs cycle between an inactive GDP-bound form and an active GTP-bound form that is able to recruit to membranes different set of downstream effectors directly responsible for vesicle formation, movement, tethering and fusion. Ypt1 regulates the trafficking of secretory vesicles from the endoplasmic reticulum (ER) to the Golgi. Plays a role in the initial events of the autophagic vacuole development which take place at specialized regions of the endoplasmic reticulum. Also involved in the recycling of membrane proteins. The sequence is that of GTP-binding protein ypt1 (ypt1) from Schizosaccharomyces pombe (strain 972 / ATCC 24843) (Fission yeast).